Consider the following 109-residue polypeptide: Elongation factor G, chloroplastic (109 aa).

The protein belongs to the GTP-binding elongation factor family. EF-G/EF-2 subfamily.

It is found in the plastid. Its subcellular location is the chloroplast. It functions in the pathway protein biosynthesis; polypeptide chain elongation. In terms of biological role, chloroplast-localized elongation factor EF-G involved in protein synthesis in plastids. Catalyzes the GTP-dependent ribosomal translocation step during translation elongation. During this step, the ribosome changes from the pre-translocational (PRE) to the post-translocational (POST) state as the newly formed A-site-bound peptidyl-tRNA and P-site-bound deacylated tRNA move to the P and E sites, respectively. Catalyzes the coordinated movement of the two tRNA molecules, the mRNA and conformational changes in the ribosome. This chain is Elongation factor G, chloroplastic, found in Arachis hypogaea (Peanut).